The sequence spans 756 residues: Inactive carboxypeptidase-like protein X2 (756 aa).

The signal sequence occupies residues 1–25 (MSRPGTATPALALVLLAVTLAGVGA). Residues 51–131 (EPELETFSPP…DHSVRVARED (81 aa)) are disordered. Residues 68–78 (EWERRPQEPRP) show a composition bias toward basic and acidic residues. Residues 79 to 90 (PKRATKPKKAPK) are compositionally biased toward basic residues. Positions 113–131 (KSSEKAANDDHSVRVARED) are enriched in basic and acidic residues. An F5/8 type C domain is found at 134-293 (ESCPPLGLET…ICMRMEILGC (160 aa)). C136 and C293 form a disulfide bridge. N-linked (GlcNAc...) asparagine glycosylation is found at N231, N241, N281, N337, and N491. Residues 317–640 (KHHNYKEMRQ…ESLIVFMEQV (324 aa)) enclose the Peptidase M14 domain.

Belongs to the peptidase M14 family.

It localises to the secreted. May be involved in cell-cell interactions. In Homo sapiens (Human), this protein is Inactive carboxypeptidase-like protein X2 (CPXM2).